A 302-amino-acid polypeptide reads, in one-letter code: Sulfate adenylyltransferase subunit 2 (302 aa).

Belongs to the PAPS reductase family. CysD subfamily. Heterodimer composed of CysD, the smaller subunit, and CysN.

It catalyses the reaction sulfate + ATP + H(+) = adenosine 5'-phosphosulfate + diphosphate. It participates in sulfur metabolism; hydrogen sulfide biosynthesis; sulfite from sulfate: step 1/3. Functionally, with CysN forms the ATP sulfurylase (ATPS) that catalyzes the adenylation of sulfate producing adenosine 5'-phosphosulfate (APS) and diphosphate, the first enzymatic step in sulfur assimilation pathway. APS synthesis involves the formation of a high-energy phosphoric-sulfuric acid anhydride bond driven by GTP hydrolysis by CysN coupled to ATP hydrolysis by CysD. This is Sulfate adenylyltransferase subunit 2 from Yersinia enterocolitica serotype O:8 / biotype 1B (strain NCTC 13174 / 8081).